The sequence spans 133 residues: Nickel-responsive regulator (133 aa).

Ni(2+) contacts are provided by histidine 76, histidine 87, histidine 89, and cysteine 95.

Belongs to the transcriptional regulatory CopG/NikR family. Homotetramer. Requires Ni(2+) as cofactor.

In terms of biological role, transcriptional repressor of the nikABCDE operon. Is active in the presence of excessive concentrations of intracellular nickel. The chain is Nickel-responsive regulator from Salmonella choleraesuis (strain SC-B67).